Here is a 702-residue protein sequence, read N- to C-terminus: Ribosomal RNA large subunit methyltransferase K/L (702 aa).

The region spanning 43–154 is the THUMP domain; the sequence is LIYQSLMWSR…KETASIALDL (112 aa).

Belongs to the methyltransferase superfamily. RlmKL family.

Its subcellular location is the cytoplasm. It catalyses the reaction guanosine(2445) in 23S rRNA + S-adenosyl-L-methionine = N(2)-methylguanosine(2445) in 23S rRNA + S-adenosyl-L-homocysteine + H(+). The catalysed reaction is guanosine(2069) in 23S rRNA + S-adenosyl-L-methionine = N(2)-methylguanosine(2069) in 23S rRNA + S-adenosyl-L-homocysteine + H(+). Functionally, specifically methylates the guanine in position 2445 (m2G2445) and the guanine in position 2069 (m7G2069) of 23S rRNA. This Salmonella choleraesuis (strain SC-B67) protein is Ribosomal RNA large subunit methyltransferase K/L.